A 118-amino-acid polypeptide reads, in one-letter code: Small ribosomal subunit protein bS6 (118 aa).

A disordered region spans residues 98–118; sequence TAAPAAKVAPVETAPAAEAAE. The segment covering 99 to 118 has biased composition (low complexity); the sequence is AAPAAKVAPVETAPAAEAAE.

It belongs to the bacterial ribosomal protein bS6 family.

In terms of biological role, binds together with bS18 to 16S ribosomal RNA. The chain is Small ribosomal subunit protein bS6 from Geobacter metallireducens (strain ATCC 53774 / DSM 7210 / GS-15).